The primary structure comprises 286 residues: Alpha-ketoglutarate-dependent dioxygenase alkB homolog 3 (286 aa).

Positions 1 to 38 are disordered; it reads MEDKRRRARVQGAWAGPAKSQATAQPAPTAENNLQQRP. The span at 20–36 shows a compositional bias: polar residues; the sequence is SQATAQPAPTAENNLQQ. Residues W115 and 141 to 143 contribute to the substrate site; that span reads YTY. The Fe2OG dioxygenase domain occupies 172–278; the sequence is SFNSLLCNLY…RINLTFRTVY (107 aa). L177 is modified ((4R)-5-hydroxyleucine; alternate). At L177 the chain carries (4R)-5-oxoleucine; alternate. 179–181 contributes to the 2-oxoglutarate binding site; that stretch reads NLY. 2 residues coordinate Fe cation: H191 and D193. D194 contacts substrate. H257 is a Fe cation binding site. 2-oxoglutarate is bound by residues 269–275 and R275; that span reads RINLTFR.

This sequence belongs to the alkB family. Interacts with the ASCC complex composed of ASCC1, ASCC2 and ASCC3. Interacts directly with ASCC3, and is thereby recruited to the ASCC complex. Interacts with OTUD4; the interaction is direct. Interacts with USP7 and USP9X. Fe(2+) is required as a cofactor. Ubiquitinated; undergoes 'Lys-48'-linked polyubiquitination. OTUD4 promotes USP7 and USP9X-dependent deubiquitination of 'Lys-48'-polyubiquitinated ALKBH3 promoting the repair of alkylated DNA lesions.

It localises to the nucleus. It is found in the cytoplasm. The enzyme catalyses an N(1)-methyladenosine in mRNA + 2-oxoglutarate + O2 = an adenosine in mRNA + formaldehyde + succinate + CO2. The catalysed reaction is a methylated nucleobase within DNA + 2-oxoglutarate + O2 = a nucleobase within DNA + formaldehyde + succinate + CO2. It carries out the reaction an N(1)-methyl-2'-deoxyadenosine in single-stranded DNA + 2-oxoglutarate + O2 = a 2'-deoxyadenosine in single-stranded DNA + formaldehyde + succinate + CO2 + H(+). It catalyses the reaction an N(3)-methyl-2'-deoxycytidine in single-stranded DNA + 2-oxoglutarate + O2 = a 2'-deoxycytidine in single-stranded DNA + formaldehyde + succinate + CO2 + H(+). The enzyme catalyses a 3,N(4)-etheno-2'-deoxycytidine in single-stranded DNA + 2-oxoglutarate + O2 + H2O = a 2'-deoxycytidine in single-stranded DNA + glyoxal + succinate + CO2. Activated by ascorbate. Functionally, dioxygenase that mediates demethylation of DNA and RNA containing 1-methyladenosine (m1A). Repairs alkylated DNA containing 1-methyladenosine (m1A) and 3-methylcytosine (m3C) by oxidative demethylation. Has a strong preference for single-stranded DNA. Able to process alkylated m3C within double-stranded regions via its interaction with ASCC3, which promotes DNA unwinding to generate single-stranded substrate needed for ALKBH3. Can repair exocyclic 3,N4-ethenocytosine adducs in single-stranded DNA. Also acts on RNA. Demethylates N(1)-methyladenosine (m1A) RNA, an epigenetic internal modification of messenger RNAs (mRNAs) highly enriched within 5'-untranslated regions (UTRs) and in the vicinity of start codons. Requires molecular oxygen, alpha-ketoglutarate and iron. The chain is Alpha-ketoglutarate-dependent dioxygenase alkB homolog 3 from Bos taurus (Bovine).